A 60-amino-acid chain; its full sequence is Large ribosomal subunit protein bL32 (60 aa).

This sequence belongs to the bacterial ribosomal protein bL32 family.

In Streptococcus equi subsp. zooepidemicus (strain MGCS10565), this protein is Large ribosomal subunit protein bL32.